The following is a 479-amino-acid chain: Replication factor C large subunit (479 aa).

56-63 (GPPGVGKT) lines the ATP pocket. Residues 435 to 461 (LGEKPLEPQEAKARRRGEKASRDEGRK) are compositionally biased toward basic and acidic residues. The disordered stretch occupies residues 435-479 (LGEKPLEPQEAKARRRGEKASRDEGRKAGKRERKGVGLDFFLGEQ).

This sequence belongs to the activator 1 small subunits family. RfcL subfamily. As to quaternary structure, heteromultimer composed of small subunits (RfcS) and large subunits (RfcL).

Part of the RFC clamp loader complex which loads the PCNA sliding clamp onto DNA. The sequence is that of Replication factor C large subunit from Aeropyrum pernix (strain ATCC 700893 / DSM 11879 / JCM 9820 / NBRC 100138 / K1).